The sequence spans 597 residues: Electron transfer flavoprotein-ubiquinone oxidoreductase, mitochondrial (597 aa).

53–67 contacts FAD; that stretch reads VVIVGGGPSGLSAAI. Residues 91 to 112 lie within the membrane without spanning it; it reads IGGHTLSGAVIETRALDELIPN. A ubiquinone contacts are provided by Gly285 and Gly286. Residues 409–426 lie within the membrane without spanning it; sequence IDPATYDKNIRDTYVVKE. Positions 540, 566, 569, and 572 each coordinate [4Fe-4S] cluster. Positions 557–586 constitute a 4Fe-4S ferredoxin-type domain; that stretch reads KRLQINAQNCIHCKTCDIKDPQQNINWVTP.

The protein belongs to the ETF-QO/FixC family. Monomer. [4Fe-4S] cluster serves as cofactor. It depends on FAD as a cofactor.

Its subcellular location is the mitochondrion inner membrane. The catalysed reaction is a ubiquinone + reduced [electron-transfer flavoprotein] = a ubiquinol + oxidized [electron-transfer flavoprotein] + H(+). Its function is as follows. Accepts electrons from ETF and reduces ubiquinone. The protein is Electron transfer flavoprotein-ubiquinone oxidoreductase, mitochondrial (let-721) of Caenorhabditis elegans.